Consider the following 122-residue polypeptide: N(2)-fixation sustaining protein CowN (122 aa).

Belongs to the CowN family.

Is required to sustain N(2)-dependent growth in the presence of low levels of carbon monoxide (CO). Probably acts by protecting the N(2) fixation ability of the nitrogenase complex, which is inactivated in the presence of CO. The sequence is that of N(2)-fixation sustaining protein CowN from Azorhizobium caulinodans (strain ATCC 43989 / DSM 5975 / JCM 20966 / LMG 6465 / NBRC 14845 / NCIMB 13405 / ORS 571).